A 314-amino-acid polypeptide reads, in one-letter code: tRNA pseudouridine synthase B (314 aa).

Histidine 43 contributes to the substrate binding site. Aspartate 48 (nucleophile) is an active-site residue. Positions 76, 179, and 200 each coordinate substrate.

This sequence belongs to the pseudouridine synthase TruB family. Type 1 subfamily.

It carries out the reaction uridine(55) in tRNA = pseudouridine(55) in tRNA. In terms of biological role, responsible for synthesis of pseudouridine from uracil-55 in the psi GC loop of transfer RNAs. In Enterobacter sp. (strain 638), this protein is tRNA pseudouridine synthase B.